The following is a 449-amino-acid chain: UDP-N-acetylmuramoylalanine--D-glutamate ligase (449 aa).

118 to 124 (GTNGKTT) serves as a coordination point for ATP.

The protein belongs to the MurCDEF family.

Its subcellular location is the cytoplasm. The enzyme catalyses UDP-N-acetyl-alpha-D-muramoyl-L-alanine + D-glutamate + ATP = UDP-N-acetyl-alpha-D-muramoyl-L-alanyl-D-glutamate + ADP + phosphate + H(+). It functions in the pathway cell wall biogenesis; peptidoglycan biosynthesis. In terms of biological role, cell wall formation. Catalyzes the addition of glutamate to the nucleotide precursor UDP-N-acetylmuramoyl-L-alanine (UMA). The chain is UDP-N-acetylmuramoylalanine--D-glutamate ligase from Staphylococcus epidermidis (strain ATCC 12228 / FDA PCI 1200).